The following is a 151-amino-acid chain: Arginine repressor (151 aa).

Belongs to the ArgR family.

The protein localises to the cytoplasm. It participates in amino-acid biosynthesis; L-arginine biosynthesis [regulation]. Its function is as follows. Regulates arginine biosynthesis genes. This is Arginine repressor from Haemophilus influenzae (strain PittGG).